The primary structure comprises 306 residues: uncharacterized protein (306 aa).

The interval 287–306 is disordered; that stretch reads DEEGKSEDAKRQEEEKKKSS.

It belongs to the aldo/keto reductase family.

Its subcellular location is the cytoplasm. The protein localises to the nucleus. This is an uncharacterized protein from Schizosaccharomyces pombe (strain 972 / ATCC 24843) (Fission yeast).